Reading from the N-terminus, the 150-residue chain is Sulfur-rich protein, serovars L1/L3 (150 aa).

The disordered stretch occupies residues 1–20 (MSTVPVVQGAGSSNSAQDIS). The next 2 membrane-spanning stretches (helical) occupy residues 43 to 63 (VGLV…VSAA) and 69 to 89 (IYLA…ILSM).

The protein resides in the membrane. The sequence is that of Sulfur-rich protein, serovars L1/L3 (srp) from Chlamydia trachomatis.